The primary structure comprises 1032 residues: Exportin-T (1032 aa).

It belongs to the exportin family.

The protein resides in the nucleus. Its subcellular location is the cytoplasm. In terms of biological role, tRNA nucleus export receptor which facilitates tRNA translocation across the nuclear pore complex. Involved in pre-tRNA splicing, probably by affecting the interaction of pre-tRNA with splicing endonuclease. In Aspergillus fumigatus (strain ATCC MYA-4609 / CBS 101355 / FGSC A1100 / Af293) (Neosartorya fumigata), this protein is Exportin-T (los1).